A 59-amino-acid chain; its full sequence is uncharacterized protein (59 aa).

This is an uncharacterized protein from Caenorhabditis elegans.